The primary structure comprises 369 residues: Flagellar P-ring protein (369 aa).

The first 22 residues, Met-1–Ala-22, serve as a signal peptide directing secretion.

Belongs to the FlgI family. The basal body constitutes a major portion of the flagellar organelle and consists of four rings (L,P,S, and M) mounted on a central rod.

It is found in the periplasm. Its subcellular location is the bacterial flagellum basal body. Functionally, assembles around the rod to form the L-ring and probably protects the motor/basal body from shearing forces during rotation. This chain is Flagellar P-ring protein, found in Pseudomonas entomophila (strain L48).